A 995-amino-acid chain; its full sequence is Beta-agarase A (995 aa).

A signal peptide spans 1 to 20; the sequence is MKIKFLSAAIAASLALPLSA. Residues 936–972 form a disordered region; the sequence is GTNIGVSHSGPEAPDPGEPVDPPIDPPTPPTGGVTGG. A compositionally biased stretch (pro residues) spans 948 to 965; the sequence is APDPGEPVDPPIDPPTPP.

The protein belongs to the glycosyl hydrolase 50 family.

It catalyses the reaction Hydrolysis of (1-&gt;4)-beta-D-galactosidic linkages in agarose, giving the tetramer as the predominant product.. Hydrolyzes agarose and also neoagarotetraose to yield neoagarobiose. In Vibrio sp. (strain JT0107), this protein is Beta-agarase A (agaA).